A 213-amino-acid chain; its full sequence is ATP synthase subunit b 2 (213 aa).

The tract at residues 1 to 45 is disordered; sequence MFVTEAYAQSAPTVGETHTETPAVGQPQPEATHTETGVAHGAEHG. A helical membrane pass occupies residues 57 to 76; sequence TYASQVLWLAITFGLFYLLM.

It belongs to the ATPase B chain family. As to quaternary structure, F-type ATPases have 2 components, F(1) - the catalytic core - and F(0) - the membrane proton channel. F(1) has five subunits: alpha(3), beta(3), gamma(1), delta(1), epsilon(1). F(0) has three main subunits: a(1), b(2) and c(10-14). The alpha and beta chains form an alternating ring which encloses part of the gamma chain. F(1) is attached to F(0) by a central stalk formed by the gamma and epsilon chains, while a peripheral stalk is formed by the delta and b chains.

Its subcellular location is the cell inner membrane. Its function is as follows. F(1)F(0) ATP synthase produces ATP from ADP in the presence of a proton or sodium gradient. F-type ATPases consist of two structural domains, F(1) containing the extramembraneous catalytic core and F(0) containing the membrane proton channel, linked together by a central stalk and a peripheral stalk. During catalysis, ATP synthesis in the catalytic domain of F(1) is coupled via a rotary mechanism of the central stalk subunits to proton translocation. Functionally, component of the F(0) channel, it forms part of the peripheral stalk, linking F(1) to F(0). The b'-subunit is a diverged and duplicated form of b found in plants and photosynthetic bacteria. This Agrobacterium fabrum (strain C58 / ATCC 33970) (Agrobacterium tumefaciens (strain C58)) protein is ATP synthase subunit b 2 (atpF2).